We begin with the raw amino-acid sequence, 261 residues long: Carnitinyl-CoA dehydratase (261 aa).

Residue E111 is the Nucleophile of the active site. The Proton acceptor role is filled by E131.

Belongs to the enoyl-CoA hydratase/isomerase family.

It carries out the reaction (R)-carnitinyl-CoA = crotonobetainyl-CoA + H2O. Its pathway is amine and polyamine metabolism; carnitine metabolism. Its function is as follows. Catalyzes the reversible dehydration of L-carnitinyl-CoA to crotonobetainyl-CoA. This chain is Carnitinyl-CoA dehydratase, found in Escherichia coli (strain ATCC 8739 / DSM 1576 / NBRC 3972 / NCIMB 8545 / WDCM 00012 / Crooks).